The following is a 654-amino-acid chain: Marinolic acid--CoA ligase (654 aa).

The protein belongs to the ATP-dependent AMP-binding enzyme family.

The catalysed reaction is ATP + a marinolic acid + CoA = AMP + diphosphate + a marinoloyl-CoA.. It carries out the reaction ATP + a pseudomonic acid + CoA = AMP + diphosphate + a pseudomonoyl-CoA.. The enzyme catalyses marinolate C + ATP + CoA = marinoloyl-CoA C + AMP + diphosphate. It catalyses the reaction pseudomonate C + ATP + CoA = pseudomonoyl-CoA C + AMP + diphosphate. It functions in the pathway antibiotic biosynthesis. In terms of biological role, acyl-CoA ligase that catalyzes the CoA acylation of pseudomonate C, leading to the formation of pseudomonoyl-CoA C (PAC-CoA). Also shows high activity with pseudomonoyl-CoA A as substrate. In addition, can activate acetic, octanoic, 2,4-dodecadienoic and 2,4-decadienoic acids, although with much lower activity. In vivo, is probably involved in the biosynthesis of thiomarinol, a naturally occurring double-headed antibiotic. The chain is Marinolic acid--CoA ligase from Pseudoalteromonas sp. (strain SANK 73390).